Here is a 287-residue protein sequence, read N- to C-terminus: 4-diphosphocytidyl-2-C-methyl-D-erythritol kinase (287 aa).

K12 is a catalytic residue. 94-104 (PAQAGMGGGSS) is a binding site for ATP. The active site involves D136.

The protein belongs to the GHMP kinase family. IspE subfamily.

It catalyses the reaction 4-CDP-2-C-methyl-D-erythritol + ATP = 4-CDP-2-C-methyl-D-erythritol 2-phosphate + ADP + H(+). It participates in isoprenoid biosynthesis; isopentenyl diphosphate biosynthesis via DXP pathway; isopentenyl diphosphate from 1-deoxy-D-xylulose 5-phosphate: step 3/6. Catalyzes the phosphorylation of the position 2 hydroxy group of 4-diphosphocytidyl-2C-methyl-D-erythritol. The chain is 4-diphosphocytidyl-2-C-methyl-D-erythritol kinase from Albidiferax ferrireducens (strain ATCC BAA-621 / DSM 15236 / T118) (Rhodoferax ferrireducens).